Consider the following 448-residue polypeptide: tRNA wybutosine-synthesizing protein 2 homolog (448 aa).

S-adenosyl-L-methionine contacts are provided by residues Ser-218, Lys-225, Glu-265, and 293–294; that span reads DN.

It belongs to the class I-like SAM-binding methyltransferase superfamily. TRM5/TYW2 family.

It catalyses the reaction 4-demethylwyosine(37) in tRNA(Phe) + S-adenosyl-L-methionine = 4-demethyl-7-[(3S)-3-amino-3-carboxypropyl]wyosine(37) in tRNA(Phe) + S-methyl-5'-thioadenosine + H(+). It participates in tRNA modification; wybutosine-tRNA(Phe) biosynthesis. Its function is as follows. S-adenosyl-L-methionine-dependent transferase that acts as a component of the wybutosine biosynthesis pathway. Wybutosine is a hyper modified guanosine with a tricyclic base found at the 3'-position adjacent to the anticodon of eukaryotic phenylalanine tRNA. Catalyzes the transfer of the alpha-amino-alpha-carboxypropyl (acp) group from S-adenosyl-L-methionine to the C-7 position of 4-demethylwyosine (imG-14) to produce wybutosine-86. In Macaca fascicularis (Crab-eating macaque), this protein is tRNA wybutosine-synthesizing protein 2 homolog (TRMT12).